The primary structure comprises 165 residues: Transcription antitermination protein NusB (165 aa).

The interval 1–27 is disordered; the sequence is MISDDTDQFNPRDAKSPEAAKGKSAKR. Over residues 10–21 the composition is skewed to basic and acidic residues; sequence NPRDAKSPEAAK.

This sequence belongs to the NusB family.

Functionally, involved in transcription antitermination. Required for transcription of ribosomal RNA (rRNA) genes. Binds specifically to the boxA antiterminator sequence of the ribosomal RNA (rrn) operons. The sequence is that of Transcription antitermination protein NusB from Pseudomonas savastanoi pv. phaseolicola (strain 1448A / Race 6) (Pseudomonas syringae pv. phaseolicola (strain 1448A / Race 6)).